The primary structure comprises 243 residues: Tryptophan synthase alpha chain (243 aa).

Catalysis depends on proton acceptor residues glutamate 31 and aspartate 42.

It belongs to the TrpA family. As to quaternary structure, tetramer of two alpha and two beta chains.

The catalysed reaction is (1S,2R)-1-C-(indol-3-yl)glycerol 3-phosphate + L-serine = D-glyceraldehyde 3-phosphate + L-tryptophan + H2O. The protein operates within amino-acid biosynthesis; L-tryptophan biosynthesis; L-tryptophan from chorismate: step 5/5. Functionally, the alpha subunit is responsible for the aldol cleavage of indoleglycerol phosphate to indole and glyceraldehyde 3-phosphate. The sequence is that of Tryptophan synthase alpha chain from Staphylococcus haemolyticus (strain JCSC1435).